The following is a 163-amino-acid chain: Developmental pluripotency-associated protein 3 (163 aa).

In terms of tissue distribution, preferentially expressed in oocyte.

The protein resides in the nucleus. The protein localises to the cytoplasm. Primordial germ cell (PGCs)-specific protein involved in epigenetic chromatin reprogramming in the zygote following fertilization. In zygotes, DNA demethylation occurs selectively in the paternal pronucleus before the first cell division, while the adjacent maternal pronucleus and certain paternally-imprinted loci are protected from this process. Participates in protection of DNA methylation in the maternal pronucleus by preventing conversion of 5mC to 5hmC: specifically recognizes and binds histone H3 dimethylated at 'Lys-9' (H3K9me2) on maternal genome, and protects maternal genome from TET3-mediated conversion to 5hmC and subsequent DNA demethylation. Does not bind paternal chromatin, which is mainly packed into protamine and does not contain much H3K9me2 mark. Also protects imprinted loci that are marked with H3K9me2 in mature sperm from DNA demethylation in early embryogenesis. May be important for the totipotent/pluripotent states continuing through preimplantation development. Also involved in chromatin condensation in oocytogenesis. This is Developmental pluripotency-associated protein 3 (DPPA3) from Bos taurus (Bovine).